We begin with the raw amino-acid sequence, 232 residues long: Large ribosomal subunit protein uL1 (232 aa).

Belongs to the universal ribosomal protein uL1 family. As to quaternary structure, part of the 50S ribosomal subunit.

Binds directly to 23S rRNA. The L1 stalk is quite mobile in the ribosome, and is involved in E site tRNA release. In terms of biological role, protein L1 is also a translational repressor protein, it controls the translation of the L11 operon by binding to its mRNA. The sequence is that of Large ribosomal subunit protein uL1 from Paraburkholderia xenovorans (strain LB400).